A 452-amino-acid chain; its full sequence is Keratin, type I cytoskeletal 15 (452 aa).

Positions Met1–Asn97 are head. Phosphoserine is present on residues Ser15, Ser16, Ser28, Ser33, and Ser47. Residues Glu98 to Trp133 are coil 1A. The 313-residue stretch at Glu98–Met410 folds into the IF rod domain. A Phosphothreonine modification is found at Thr124. The tract at residues Tyr134 to Thr152 is linker 1. The interval Met153–Phe244 is coil 1B. Positions Ser245–Leu264 are linker 12. A coil 2 region spans residues Thr265–Gln406. A Glycyl lysine isopeptide (Lys-Gly) (interchain with G-Cter in SUMO2) cross-link involves residue Lys293. Phosphothreonine is present on residues Thr294 and Thr316. The tract at residues Asp407–Ile452 is tail. Residues Ile413–Ile452 are disordered. Lys443 participates in a covalent cross-link: Glycyl lysine isopeptide (Lys-Gly) (interchain with G-Cter in SUMO1); alternate. Lys443 participates in a covalent cross-link: Glycyl lysine isopeptide (Lys-Gly) (interchain with G-Cter in SUMO2); alternate.

Belongs to the intermediate filament family. As to quaternary structure, heterotetramer of two type I and two type II keratins. Forms a heterodimer with KRT14. Interacts with PLEC isoform 1C, when in a heterodimer with KRT14. Interacts with NOD2. In terms of tissue distribution, expressed strongly in the basal cell layer at the tips of rete-like prominences (RLPs) of adult dorsal tongue, outer root sheath (ORS) of hair follicle and skin epidermis (at protein level).

In terms of biological role, in the absence of KRT14, makes a bona fide, but ultrastructurally distinct keratin filament network with KRT5. The polypeptide is Keratin, type I cytoskeletal 15 (Krt15) (Mus musculus (Mouse)).